A 121-amino-acid polypeptide reads, in one-letter code: MTGRVKKTNPRLTSLITTLKDASRTGEVKIWRDIANRLEASTSAHAEVNISKINRYAAEGETILVPGKVLGSGMLNQSVRVAALNFSESAVSKIAKAQGTCMTIEELLANNPKGSRVRILR.

The protein belongs to the eukaryotic ribosomal protein eL18 family.

This is Large ribosomal subunit protein eL18 from Methanosphaerula palustris (strain ATCC BAA-1556 / DSM 19958 / E1-9c).